Reading from the N-terminus, the 66-residue chain is UPF0434 protein Nwi_0075 (66 aa).

This sequence belongs to the UPF0434 family.

The chain is UPF0434 protein Nwi_0075 from Nitrobacter winogradskyi (strain ATCC 25391 / DSM 10237 / CIP 104748 / NCIMB 11846 / Nb-255).